The sequence spans 156 residues: MKLQLIAVGTRMPDWVTRGFEEYQRRFPRDMALELIEIPAGKRGKNADIVRILQKEGEQMLAAIPKGNHIVTLDLPGKNWTTPELATAMNKWQLDGRDVSLLVGGPEGLAPACKEAAHQSWCLSALTLPHPLVRIVVAESLYRAWSVNTNHPYHRE.

S-adenosyl-L-methionine-binding positions include Leu-73, Gly-104, and 123–128 (LSALTL).

This sequence belongs to the RNA methyltransferase RlmH family. As to quaternary structure, homodimer.

The protein resides in the cytoplasm. It carries out the reaction pseudouridine(1915) in 23S rRNA + S-adenosyl-L-methionine = N(3)-methylpseudouridine(1915) in 23S rRNA + S-adenosyl-L-homocysteine + H(+). Its function is as follows. Specifically methylates the pseudouridine at position 1915 (m3Psi1915) in 23S rRNA. This chain is Ribosomal RNA large subunit methyltransferase H, found in Shewanella sp. (strain ANA-3).